We begin with the raw amino-acid sequence, 302 residues long: Mas-related G-protein coupled receptor member A3 (302 aa).

The Extracellular segment spans residues 1–17 (MNETIPGSIDIETLIPD). N2 carries N-linked (GlcNAc...) asparagine glycosylation. A helical transmembrane segment spans residues 18–38 (LMIIIFGLVGLTGNAIVFWLL). Topologically, residues 39 to 46 (GFRMHRTA) are cytoplasmic. The helical transmembrane segment at 47 to 67 (FLVYILNLALADFLFLLCHII) threads the bilayer. N68 carries an N-linked (GlcNAc...) asparagine glycan. Topologically, residues 68 to 81 (NSTVDLLKFTLPKG) are extracellular. The chain crosses the membrane as a helical span at residues 82 to 102 (IFAFCFHTIKRVLYITGLSML). The Cytoplasmic portion of the chain corresponds to 103–129 (SAISTERCLSVLCPIWYHCRRPEHTST). Residues 130 to 150 (VMCAVIWVLSLLICILDGYFC) traverse the membrane as a helical segment. Residues 151-167 (GYLDNHYFNYSVCQAWD) lie on the Extracellular side of the membrane. N159 carries an N-linked (GlcNAc...) asparagine glycan. Residues 168–188 (IFIGAYLMFLFVVLCLSTLAL) traverse the membrane as a helical segment. Topologically, residues 189 to 211 (LARLFCGARNMKFTRLFVTIMLT) are cytoplasmic. Residues 212-232 (VLVFLLCGLPWGITWFLLFWI) traverse the membrane as a helical segment. Residues 233–242 (APGVFVLDYS) are Extracellular-facing. The helical transmembrane segment at 243-263 (PLLVLTAINSCANPIIYFFVG) threads the bilayer. The Cytoplasmic segment spans residues 264–302 (SFRQRLNKQTLKMVLQKALQDTPETPENMVEMSRNKAEP).

The protein belongs to the G-protein coupled receptor 1 family. Mas subfamily. Expressed exclusively in dorsal root ganglia and nodose ganglia. Expressed in a subset of sensory neurons that includes nociceptors. Expressed in the subclass of non-peptidergic sensory neurons that are IB4(+) and VR1(-).

It is found in the cell membrane. In terms of biological role, orphan receptor. May be a receptor for RFamide-family neuropeptides such as NPFF and NPAF, which are analgesic in vivo. May regulate nociceptor function and/or development, including the sensation or modulation of pain. Activated by the antimalarial drug chloroquine. Mediates chloroquine-induced itch, in a histamine-independent manner. The chain is Mas-related G-protein coupled receptor member A3 (Mrgpra3) from Mus musculus (Mouse).